The chain runs to 346 residues: Upstream stimulatory factor 2 (346 aa).

Disordered regions lie at residues 1–44 (MDML…PGAE) and 215–244 (APRTHPYSPKIDGTRTPRDERRRAQHNEVE). Positions 11–20 (ASSATAAAAA) are enriched in low complexity. Residues 226–244 (DGTRTPRDERRRAQHNEVE) are compositionally biased toward basic and acidic residues. The bHLH domain occupies 235-290 (RRRAQHNEVERRRRDKINNWIVQLSKIIPDCHADNSKTGASKGGILSKACDYIREL). The segment at 307 to 328 (LQMDNELLRQQIEELKNENALL) is leucine-zipper.

In terms of assembly, efficient DNA binding requires dimerization with another bHLH protein. Binds DNA as a homodimer or a heterodimer (USF1/USF2). Interacts with MAF.

It is found in the nucleus. Transcription factor that binds to a symmetrical DNA sequence (E-boxes) (5'-CACGTG-3') that is found in a variety of viral and cellular promoters. This is Upstream stimulatory factor 2 (Usf2) from Mus musculus (Mouse).